The sequence spans 380 residues: Cytochrome b (380 aa).

The next 4 helical transmembrane spans lie at Phe33–Met53, Trp77–Ile98, Trp113–Leu133, and Phe178–Leu198. Residues His83 and His97 each coordinate heme b. Residues His182 and His196 each contribute to the heme b site. His201 contacts a ubiquinone. Helical transmembrane passes span Tyr226–Ser246, Leu288–His308, Leu320–Gly340, and Phe347–Pro367.

It belongs to the cytochrome b family. The cytochrome bc1 complex contains 3 respiratory subunits (MT-CYB, CYC1 and UQCRFS1), 2 core proteins (UQCRC1 and UQCRC2) and probably 6 low-molecular weight proteins. Heme b is required as a cofactor.

The protein resides in the mitochondrion inner membrane. Component of the ubiquinol-cytochrome c reductase complex (complex III or cytochrome b-c1 complex) that is part of the mitochondrial respiratory chain. The b-c1 complex mediates electron transfer from ubiquinol to cytochrome c. Contributes to the generation of a proton gradient across the mitochondrial membrane that is then used for ATP synthesis. The sequence is that of Cytochrome b (mt-cyb) from Lampris guttatus (Opah).